Consider the following 151-residue polypeptide: Large ribosomal subunit protein uL15 (151 aa).

The disordered stretch occupies residues Met1–Leu60.

It belongs to the universal ribosomal protein uL15 family. In terms of assembly, part of the 50S ribosomal subunit.

In terms of biological role, binds to the 23S rRNA. This is Large ribosomal subunit protein uL15 from Streptomyces coelicolor (strain ATCC BAA-471 / A3(2) / M145).